A 343-amino-acid polypeptide reads, in one-letter code: Flavonoid 4'-O-methyltransferase 4 (343 aa).

D211 is a binding site for S-adenosyl-L-methionine. H249 (proton acceptor) is an active-site residue.

Belongs to the class I-like SAM-binding methyltransferase superfamily. Cation-independent O-methyltransferase family. In terms of assembly, homodimer.

The catalysed reaction is apigenin + S-adenosyl-L-methionine = acacetin + S-adenosyl-L-homocysteine + H(+). The enzyme catalyses kaempferol + S-adenosyl-L-methionine = kaempferide + S-adenosyl-L-homocysteine + H(+). It carries out the reaction isorhamnetin + S-adenosyl-L-methionine = 3',4'-O-dimethylquercetin + S-adenosyl-L-homocysteine + 2 H(+). It catalyses the reaction scutellarein + S-adenosyl-L-methionine = scutellarein 4'-methyl ether + S-adenosyl-L-homocysteine + H(+). The catalysed reaction is (2S)-naringenin + S-adenosyl-L-methionine = (2S)-naringenin 4'-methyl ether + S-adenosyl-L-homocysteine + H(+). The enzyme catalyses 4',7,8-trihydroxyflavone + S-adenosyl-L-methionine = 7,8-dihydroxy-4'-methoxyflavone + S-adenosyl-L-homocysteine + H(+). It carries out the reaction taxifolin + S-adenosyl-L-methionine = taxifolin 4'-methyl ether + S-adenosyl-L-homocysteine + H(+). Its pathway is flavonoid metabolism. In terms of biological role, flavonoid 4'-O-methyltransferase involved in the biosynthesis of polymethoxylated flavonoids natural products such as pebrellin, aroma compounds which contribute to the flavor of peppermint, and exhibit pharmacological activities such as anti-allergic, anti-oxidant, antibacterial, anti-proliferative, and anti-inflammatory effects. Catalyzes S-adenosylmethionine-dependent regioselective 4'-O-methylation of flavonoids; active on various hydroxylated flavonoid substrates, including isorhamnetin, kaempferol, apigenin (API), scutellarein (6-hydroxy-apigenin, 6-OH-API, SCU), taxifolin, 7,8,4'-trihydroxy-flavone and naringenin (NAR), and, with a lower efficiency, quercetin, rhamnetin, luteolin (LUT) and 7,8,3',4'-tetrahydroxy-flavone. The sequence is that of Flavonoid 4'-O-methyltransferase 4 from Mentha piperita (Peppermint).